We begin with the raw amino-acid sequence, 209 residues long: Probable glutathione peroxidase 8 (209 aa).

M1 is subject to N-acetylmethionine. Residues 18 to 40 form a helical membrane-spanning segment; sequence VFAVLLSIVLCTVTLFLLQLKFL. The active site involves C79.

The protein belongs to the glutathione peroxidase family.

It localises to the membrane. The enzyme catalyses 2 glutathione + H2O2 = glutathione disulfide + 2 H2O. This is Probable glutathione peroxidase 8 (GPX8) from Homo sapiens (Human).